Consider the following 185-residue polypeptide: Photosystem I assembly protein Ycf4 (185 aa).

A run of 2 helical transmembrane segments spans residues 20-40 and 57-77; these read GNFFWACILFLGSLGFLAVGA and ILFFPQGVVMSFYGIAGLFIS.

This sequence belongs to the Ycf4 family.

Its subcellular location is the plastid. It is found in the chloroplast thylakoid membrane. Seems to be required for the assembly of the photosystem I complex. The protein is Photosystem I assembly protein Ycf4 of Sorghum bicolor (Sorghum).